Here is a 225-residue protein sequence, read N- to C-terminus: Protein GrpE (225 aa).

Disordered regions lie at residues Met-1 to Gly-44 and Val-183 to Gly-225.

The protein belongs to the GrpE family. As to quaternary structure, homodimer.

It localises to the cytoplasm. Functionally, participates actively in the response to hyperosmotic and heat shock by preventing the aggregation of stress-denatured proteins, in association with DnaK and GrpE. It is the nucleotide exchange factor for DnaK and may function as a thermosensor. Unfolded proteins bind initially to DnaJ; upon interaction with the DnaJ-bound protein, DnaK hydrolyzes its bound ATP, resulting in the formation of a stable complex. GrpE releases ADP from DnaK; ATP binding to DnaK triggers the release of the substrate protein, thus completing the reaction cycle. Several rounds of ATP-dependent interactions between DnaJ, DnaK and GrpE are required for fully efficient folding. The protein is Protein GrpE of Streptomyces coelicolor (strain ATCC BAA-471 / A3(2) / M145).